Here is a 259-residue protein sequence, read N- to C-terminus: 4-hydroxy-tetrahydrodipicolinate reductase (259 aa).

An NAD(+)-binding site is contributed by 9-14 (GANGRM). Arg37 contributes to the NADP(+) binding site. NAD(+) contacts are provided by residues 92 to 94 (GTT) and 116 to 119 (ASNM). The active-site Proton donor/acceptor is His149. His150 contributes to the (S)-2,3,4,5-tetrahydrodipicolinate binding site. Lys153 serves as the catalytic Proton donor. Position 159 to 160 (159 to 160 (GT)) interacts with (S)-2,3,4,5-tetrahydrodipicolinate.

This sequence belongs to the DapB family.

It is found in the cytoplasm. The catalysed reaction is (S)-2,3,4,5-tetrahydrodipicolinate + NAD(+) + H2O = (2S,4S)-4-hydroxy-2,3,4,5-tetrahydrodipicolinate + NADH + H(+). It catalyses the reaction (S)-2,3,4,5-tetrahydrodipicolinate + NADP(+) + H2O = (2S,4S)-4-hydroxy-2,3,4,5-tetrahydrodipicolinate + NADPH + H(+). Its pathway is amino-acid biosynthesis; L-lysine biosynthesis via DAP pathway; (S)-tetrahydrodipicolinate from L-aspartate: step 4/4. Its function is as follows. Catalyzes the conversion of 4-hydroxy-tetrahydrodipicolinate (HTPA) to tetrahydrodipicolinate. This is 4-hydroxy-tetrahydrodipicolinate reductase from Desulfovibrio desulfuricans (strain ATCC 27774 / DSM 6949 / MB).